The sequence spans 392 residues: Bifunctional enzyme Fae/Hps (392 aa).

The interval Met-1–Ile-161 is formaldehyde-activating enzyme. The active-site Proton donor is the His-17. Substrate contacts are provided by Asp-19, Leu-48, Lys-66, Thr-68, and Gln-83. The interval Met-162–Phe-392 is 3-hexulose-6-phosphate synthase.

The protein in the N-terminal section; belongs to the formaldehyde-activating enzyme family. In the C-terminal section; belongs to the HPS/KGPDC family. HPS subfamily.

It catalyses the reaction 5,6,7,8-tetrahydromethanopterin + formaldehyde = 5,10-methylenetetrahydromethanopterin + H2O. The enzyme catalyses D-ribulose 5-phosphate + formaldehyde = D-arabino-hex-3-ulose 6-phosphate. It functions in the pathway carbohydrate biosynthesis; D-ribose 5-phosphate biosynthesis. Functionally, catalyzes the condensation of formaldehyde with tetrahydromethanopterin (H(4)MPT) to 5,10-methylenetetrahydromethanopterin. In terms of biological role, catalyzes the reversible formation of ribulose-5-phosphate and formaldehyde from 3-hexulose-6-phosphate. The protein is Bifunctional enzyme Fae/Hps of Methanosarcina acetivorans (strain ATCC 35395 / DSM 2834 / JCM 12185 / C2A).